Here is a 207-residue protein sequence, read N- to C-terminus: Proteasome subunit beta (207 aa).

A propeptide spans 1 to 7 (removed in mature form; by autocatalysis); that stretch reads MVEAFKG. Thr8 acts as the Nucleophile in catalysis.

This sequence belongs to the peptidase T1B family. The 20S proteasome core is composed of 14 alpha and 14 beta subunits that assemble into four stacked heptameric rings, resulting in a barrel-shaped structure. The two inner rings, each composed of seven catalytic beta subunits, are sandwiched by two outer rings, each composed of seven alpha subunits. The catalytic chamber with the active sites is on the inside of the barrel. Has a gated structure, the ends of the cylinder being occluded by the N-termini of the alpha-subunits. Is capped at one or both ends by the proteasome regulatory ATPase, PAN.

The protein localises to the cytoplasm. It carries out the reaction Cleavage of peptide bonds with very broad specificity.. The formation of the proteasomal ATPase PAN-20S proteasome complex, via the docking of the C-termini of PAN into the intersubunit pockets in the alpha-rings, triggers opening of the gate for substrate entry. Interconversion between the open-gate and close-gate conformations leads to a dynamic regulation of the 20S proteasome proteolysis activity. Its function is as follows. Component of the proteasome core, a large protease complex with broad specificity involved in protein degradation. The polypeptide is Proteasome subunit beta (Methanothrix thermoacetophila (strain DSM 6194 / JCM 14653 / NBRC 101360 / PT) (Methanosaeta thermophila)).